Here is a 194-residue protein sequence, read N- to C-terminus: Putative 3-methyladenine DNA glycosylase (194 aa).

The protein belongs to the DNA glycosylase MPG family.

In Synechococcus elongatus (strain ATCC 33912 / PCC 7942 / FACHB-805) (Anacystis nidulans R2), this protein is Putative 3-methyladenine DNA glycosylase.